The sequence spans 511 residues: Protein phosphatase 2C 16 (511 aa).

The signal sequence occupies residues Met1–Ser22. In terms of domain architecture, PPM-type phosphatase spans Leu189 to Leu501. Mn(2+)-binding residues include Asp243, Gly244, Asp432, and Asp492.

It belongs to the PP2C family. In terms of assembly, interacts with SWI3B (via N-terminus). Interacts with ABA-bounded PYR1, PYL1, PYL2, PYL3, PYL4, PYL5, PYL6, PYL8 and PYL9, and with free PYL2, PYL3, PYL4, PYL10 and PYL13. It depends on Mg(2+) as a cofactor. Mn(2+) serves as cofactor. Expressed in seeds, roots, stems, leaves and flowers, especially in meristematic tissues, guard cells, embryo and siliques.

Its subcellular location is the cytoplasm. The protein localises to the nucleus. It catalyses the reaction O-phospho-L-seryl-[protein] + H2O = L-seryl-[protein] + phosphate. The enzyme catalyses O-phospho-L-threonyl-[protein] + H2O = L-threonyl-[protein] + phosphate. Repressed by PYR/PYL/RCAR ABA receptors in an ABA-dependent manner. Functionally, key component and repressor of the abscisic acid (ABA) signaling pathway that regulates numerous ABA responses, such as stomatal closure, seed germination and inhibition of vegetative growth. Confers enhanced sensitivity to drought. This chain is Protein phosphatase 2C 16 (HAB1), found in Arabidopsis thaliana (Mouse-ear cress).